A 360-amino-acid chain; its full sequence is Glutamate 5-kinase (360 aa).

ATP is bound at residue K7. Substrate-binding residues include S47, D134, and N146. Residues 166 to 167 and 210 to 216 contribute to the ATP site; these read TD and TGGISTK. The region spanning 275–356 is the PUA domain; the sequence is VGKITLDDGA…SSIIVVHRDV (82 aa).

The protein belongs to the glutamate 5-kinase family.

It is found in the cytoplasm. The enzyme catalyses L-glutamate + ATP = L-glutamyl 5-phosphate + ADP. The protein operates within amino-acid biosynthesis; L-proline biosynthesis; L-glutamate 5-semialdehyde from L-glutamate: step 1/2. Its function is as follows. Catalyzes the transfer of a phosphate group to glutamate to form L-glutamate 5-phosphate. This Prochlorococcus marinus (strain MIT 9312) protein is Glutamate 5-kinase.